We begin with the raw amino-acid sequence, 419 residues long: S-adenosylmethionine synthase (419 aa).

H15 contributes to the ATP binding site. A Mg(2+)-binding site is contributed by D17. E43 serves as a coordination point for K(+). L-methionine is bound by residues E56 and Q99. The flexible loop stretch occupies residues 99–109 (QSPEIAQGVSC). ATP contacts are provided by residues 173–175 (DGK), 253–254 (RF), D262, 268–269 (RK), A285, and K289. D262 serves as a coordination point for L-methionine. K293 contacts L-methionine.

The protein belongs to the AdoMet synthase family. As to quaternary structure, homotetramer; dimer of dimers. Mg(2+) is required as a cofactor. K(+) serves as cofactor.

The protein resides in the cytoplasm. The enzyme catalyses L-methionine + ATP + H2O = S-adenosyl-L-methionine + phosphate + diphosphate. The protein operates within amino-acid biosynthesis; S-adenosyl-L-methionine biosynthesis; S-adenosyl-L-methionine from L-methionine: step 1/1. In terms of biological role, catalyzes the formation of S-adenosylmethionine (AdoMet) from methionine and ATP. The overall synthetic reaction is composed of two sequential steps, AdoMet formation and the subsequent tripolyphosphate hydrolysis which occurs prior to release of AdoMet from the enzyme. This chain is S-adenosylmethionine synthase, found in Gloeobacter violaceus (strain ATCC 29082 / PCC 7421).